Reading from the N-terminus, the 173-residue chain is Cytochrome c-type biogenesis protein CcmE (173 aa).

Over 1 to 8 the chain is Cytoplasmic; sequence MNPRRKSR. Residues 9 to 29 traverse the membrane as a helical; Signal-anchor for type II membrane protein segment; it reads FKLVIFVVLGIAIASGLMLYA. Residues 30 to 173 are Periplasmic-facing; that stretch reads LRQNIDLFYT…RDRQEKEGAK (144 aa). H131 and Y135 together coordinate heme. The segment at 152-173 is disordered; sequence GIKAADLKGESARDRQEKEGAK. The span at 156–173 shows a compositional bias: basic and acidic residues; that stretch reads ADLKGESARDRQEKEGAK.

It belongs to the CcmE/CycJ family.

The protein localises to the cell inner membrane. Heme chaperone required for the biogenesis of c-type cytochromes. Transiently binds heme delivered by CcmC and transfers the heme to apo-cytochromes in a process facilitated by CcmF and CcmH. The sequence is that of Cytochrome c-type biogenesis protein CcmE from Haemophilus influenzae (strain PittEE).